Consider the following 576-residue polypeptide: MGEALSNLEIARGAKLLPIEEVGRSMGLREERHLEPYGRHVAKVDLCAIEDLSERPKAKYILVSAITPTPLGEGKTTTTVGLGQAFSHIGKRATIAIRQASMGPAFGIKGGAAGGGYSQVVPMERLNLHLTGDLHAVTEAHNMLAAMIDNHLYHGNGLGIEPHSISWRRVMDVNDRSLRNIVIGLGARTDGVPRQSGFDITAASEVMAILALASSLEDLRERLGRIVIGHNREGNPVSAEDVRGAGAMAVILKEAIKPNLMQTLEGTPALVHAGPFGNIATGNSSVVADLIGIRTADYLITEAGFGADMGAERFFNIKCRISGLEPDAAVVVATVRALKAHSGRYQIKAGAPLPEELLEENPQDVLAGAENLKKQIENIKLHGVPAVVAINAFPTDHPSEHKAIEEAAKEVGARCAVCRHFTEGGKGAVELARALEETIEENERERRRGGGGSFRFLYPLEMPLKQKIETIAREVYGAEGVEYDAEALRALEGFERAGFGRLPVCLAKTHLSLSSDPALKGAPRGWKLSVREVRASVGAGFIYPICGQMRTMPGLSAHPAAERIDLDGEGNVVGLF.

Residue 69–76 (TPLGEGKT) participates in ATP binding.

The protein belongs to the formate--tetrahydrofolate ligase family.

It carries out the reaction (6S)-5,6,7,8-tetrahydrofolate + formate + ATP = (6R)-10-formyltetrahydrofolate + ADP + phosphate. The protein operates within one-carbon metabolism; tetrahydrofolate interconversion. The protein is Formate--tetrahydrofolate ligase 1 of Rubrobacter xylanophilus (strain DSM 9941 / JCM 11954 / NBRC 16129 / PRD-1).